The sequence spans 89 residues: Small ribosomal subunit protein uS15 (89 aa).

Residues 1–21 (MSIAAERKAEVIKTNARKDGD) show a composition bias toward basic and acidic residues. The tract at residues 1–24 (MSIAAERKAEVIKTNARKDGDTGS) is disordered.

Belongs to the universal ribosomal protein uS15 family. Part of the 30S ribosomal subunit. Forms a bridge to the 50S subunit in the 70S ribosome, contacting the 23S rRNA.

One of the primary rRNA binding proteins, it binds directly to 16S rRNA where it helps nucleate assembly of the platform of the 30S subunit by binding and bridging several RNA helices of the 16S rRNA. Its function is as follows. Forms an intersubunit bridge (bridge B4) with the 23S rRNA of the 50S subunit in the ribosome. In Rhodopseudomonas palustris (strain BisA53), this protein is Small ribosomal subunit protein uS15.